Reading from the N-terminus, the 406-residue chain is Acetate kinase (406 aa).

Asparagine 8 provides a ligand contact to Mg(2+). Lysine 15 provides a ligand contact to ATP. Arginine 92 contacts substrate. Aspartate 149 (proton donor/acceptor) is an active-site residue. Residues 209–213 (HLGNG), 283–285 (DFR), and 331–335 (GVGEN) each bind ATP. Residue glutamate 385 participates in Mg(2+) binding.

Belongs to the acetokinase family. Homodimer. Mg(2+) serves as cofactor. It depends on Mn(2+) as a cofactor.

It is found in the cytoplasm. It catalyses the reaction acetate + ATP = acetyl phosphate + ADP. Its pathway is metabolic intermediate biosynthesis; acetyl-CoA biosynthesis; acetyl-CoA from acetate: step 1/2. Its function is as follows. Catalyzes the formation of acetyl phosphate from acetate and ATP. Can also catalyze the reverse reaction. The polypeptide is Acetate kinase (Corynebacterium aurimucosum (strain ATCC 700975 / DSM 44827 / CIP 107346 / CN-1) (Corynebacterium nigricans)).